Consider the following 273-residue polypeptide: Glutamate transport system permease protein GluD (273 aa).

A run of 5 helical transmembrane segments spans residues 26-46 (ILPG…LALV), 64-84 (WFCA…LMIF), 100-120 (LAFA…IAEI), 150-170 (ILLP…MVIA), and 200-220 (LAAL…LTAL). The region spanning 30–221 (LWGTLKSAVF…VLNFSLTALA (192 aa)) is the ABC transmembrane type-1 domain. Positions 242–273 (PEQPDQGLETKDNVNVDWQDPDYKDLKTPGVQ) are disordered. Positions 262 to 273 (PDYKDLKTPGVQ) are enriched in basic and acidic residues.

Belongs to the binding-protein-dependent transport system permease family. HisMQ subfamily. The complex is composed of two ATP-binding proteins (GluA), two transmembrane proteins (GluC and GluD) and a solute-binding protein (GluB).

The protein localises to the cell membrane. Functionally, part of the ABC transporter complex GluABCD involved in glutamate uptake. Probably responsible for the translocation of the substrate across the membrane. This chain is Glutamate transport system permease protein GluD, found in Corynebacterium glutamicum (strain ATCC 13032 / DSM 20300 / JCM 1318 / BCRC 11384 / CCUG 27702 / LMG 3730 / NBRC 12168 / NCIMB 10025 / NRRL B-2784 / 534).